A 236-amino-acid chain; its full sequence is Methylosome subunit pICln (236 aa).

S2 bears the N-acetylserine mark. 6 positions are modified to phosphoserine: S95, S143, S192, S194, S197, and S209. Positions 134–158 (LHPDPEDEDSDDYDGEEYDVEAHEQ) are disordered. Residues 138–152 (PEDEDSDDYDGEEYD) are compositionally biased toward acidic residues. T222 is modified (phosphothreonine).

This sequence belongs to the pICln (TC 1.A.47) family. As to quaternary structure, component of the methylosome, a 20S complex containing at least PRMT5/SKB1, WDR77/MEP50 and CLNS1A/pICln. May mediate SNRPD1 and SNRPD3 methylation. Forms a 6S pICln-Sm complex composed of CLNS1A/pICln, SNRPD1, SNRPD2, SNRPE, SNRPF and SNRPG; ring-like structure where CLNS1A/pICln mimics additional Sm proteins and which is unable to assemble into the core snRNP. Interacts with LSM10 and LSM11. In terms of tissue distribution, expressed in most tissues.

Its subcellular location is the cytoplasm. It localises to the cytosol. The protein localises to the nucleus. The protein resides in the cytoskeleton. Functionally, involved in both the assembly of spliceosomal snRNPs and the methylation of Sm proteins. Chaperone that regulates the assembly of spliceosomal U1, U2, U4 and U5 small nuclear ribonucleoproteins (snRNPs), the building blocks of the spliceosome, and thereby plays an important role in the splicing of cellular pre-mRNAs. Most spliceosomal snRNPs contain a common set of Sm proteins SNRPB, SNRPD1, SNRPD2, SNRPD3, SNRPE, SNRPF and SNRPG that assemble in a heptameric protein ring on the Sm site of the small nuclear RNA to form the core snRNP (Sm core). In the cytosol, the Sm proteins SNRPD1, SNRPD2, SNRPE, SNRPF and SNRPG are trapped in an inactive 6S pICln-Sm complex by the chaperone CLNS1A that controls the assembly of the core snRNP. Dissociation by the SMN complex of CLNS1A from the trapped Sm proteins and their transfer to an SMN-Sm complex triggers the assembly of core snRNPs and their transport to the nucleus. This Rattus norvegicus (Rat) protein is Methylosome subunit pICln (Clns1a).